The sequence spans 344 residues: Arginine N-succinyltransferase (344 aa).

Leu-125 is a binding site for succinyl-CoA. His-229 serves as the catalytic Proton donor.

It belongs to the arginine N-succinyltransferase family.

The enzyme catalyses succinyl-CoA + L-arginine = N(2)-succinyl-L-arginine + CoA + H(+). It participates in amino-acid degradation; L-arginine degradation via AST pathway; L-glutamate and succinate from L-arginine: step 1/5. In terms of biological role, catalyzes the transfer of succinyl-CoA to arginine to produce N(2)-succinylarginine. The protein is Arginine N-succinyltransferase of Escherichia coli O17:K52:H18 (strain UMN026 / ExPEC).